Consider the following 367-residue polypeptide: UDP-N-acetylglucosamine--N-acetylmuramyl-(pentapeptide) pyrophosphoryl-undecaprenol N-acetylglucosamine transferase (367 aa).

UDP-N-acetyl-alpha-D-glucosamine is bound by residues 15–17, Asn-127, Arg-163, Ser-191, Ile-249, and Gln-294; that span reads TGG.

The protein belongs to the glycosyltransferase 28 family. MurG subfamily.

The protein resides in the cell inner membrane. The enzyme catalyses di-trans,octa-cis-undecaprenyl diphospho-N-acetyl-alpha-D-muramoyl-L-alanyl-D-glutamyl-meso-2,6-diaminopimeloyl-D-alanyl-D-alanine + UDP-N-acetyl-alpha-D-glucosamine = di-trans,octa-cis-undecaprenyl diphospho-[N-acetyl-alpha-D-glucosaminyl-(1-&gt;4)]-N-acetyl-alpha-D-muramoyl-L-alanyl-D-glutamyl-meso-2,6-diaminopimeloyl-D-alanyl-D-alanine + UDP + H(+). It functions in the pathway cell wall biogenesis; peptidoglycan biosynthesis. Cell wall formation. Catalyzes the transfer of a GlcNAc subunit on undecaprenyl-pyrophosphoryl-MurNAc-pentapeptide (lipid intermediate I) to form undecaprenyl-pyrophosphoryl-MurNAc-(pentapeptide)GlcNAc (lipid intermediate II). The chain is UDP-N-acetylglucosamine--N-acetylmuramyl-(pentapeptide) pyrophosphoryl-undecaprenol N-acetylglucosamine transferase from Burkholderia lata (strain ATCC 17760 / DSM 23089 / LMG 22485 / NCIMB 9086 / R18194 / 383).